The primary structure comprises 62 residues: Photosystem II reaction center protein Z (62 aa).

2 consecutive transmembrane segments (helical) span residues 8-28 and 41-61; these read AVFALIATSSILLISVPVVFA and FSGTSLWIGLVFLVGILNSLI.

This sequence belongs to the PsbZ family. As to quaternary structure, PSII is composed of 1 copy each of membrane proteins PsbA, PsbB, PsbC, PsbD, PsbE, PsbF, PsbH, PsbI, PsbJ, PsbK, PsbL, PsbM, PsbT, PsbY, PsbZ, Psb30/Ycf12, at least 3 peripheral proteins of the oxygen-evolving complex and a large number of cofactors. It forms dimeric complexes.

It is found in the plastid. The protein localises to the chloroplast thylakoid membrane. Its function is as follows. May control the interaction of photosystem II (PSII) cores with the light-harvesting antenna, regulates electron flow through the 2 photosystem reaction centers. PSII is a light-driven water plastoquinone oxidoreductase, using light energy to abstract electrons from H(2)O, generating a proton gradient subsequently used for ATP formation. This chain is Photosystem II reaction center protein Z, found in Gossypium barbadense (Sea Island cotton).